We begin with the raw amino-acid sequence, 510 residues long: Beta-glucosidase 12 (510 aa).

An N-terminal signal peptide occupies residues 1 to 24; the sequence is MAAAGAMPGGLLLTFLLLAVVASG. Gln-53 is an a beta-D-glucoside binding site. Residue Asn-122 is glycosylated (N-linked (GlcNAc...) asparagine). A beta-D-glucoside contacts are provided by residues His-157 and 202-203; that span reads NE. Catalysis depends on Glu-203, which acts as the Proton donor. 2 cysteine pairs are disulfide-bonded: Cys-208-Cys-243 and Cys-222-Cys-230. N-linked (GlcNAc...) asparagine glycosylation occurs at Asn-229. A beta-D-glucoside is bound at residue Tyr-346. 2 N-linked (GlcNAc...) asparagine glycosylation sites follow: Asn-361 and Asn-371. Glu-417 serves as a coordination point for a beta-D-glucoside. Residue Glu-417 is the Nucleophile of the active site. Asn-425 carries an N-linked (GlcNAc...) asparagine glycan. Residues Trp-466, 473-474, and Phe-482 contribute to the a beta-D-glucoside site; that span reads EW.

Belongs to the glycosyl hydrolase 1 family.

The protein localises to the secreted. It catalyses the reaction Hydrolysis of terminal, non-reducing beta-D-glucosyl residues with release of beta-D-glucose.. In terms of biological role, hydrolyzes p-nitrophenyl beta-D-glucoside, p-nitrophenyl beta-D-galactoside, p-nitrophenyl beta-D-xyloside, p-nitrophenyl beta-D-fucoside, p-nitrophenyl beta-L-arabinoside, cello-oligosaccharides and laminaribiose. The protein is Beta-glucosidase 12 of Oryza sativa subsp. japonica (Rice).